Here is a 353-residue protein sequence, read N- to C-terminus: Photosystem II D2 protein (353 aa).

Thr-2 bears the N-acetylthreonine mark. Thr-2 bears the Phosphothreonine mark. Residues Cys-41–Thr-61 traverse the membrane as a helical segment. His-118 is a chlorophyll a binding site. A helical membrane pass occupies residues Gly-125–Pro-141. Pheophytin a is bound by residues Gln-130 and Asn-143. A helical transmembrane segment spans residues Val-153–Ser-166. His-198 is a binding site for chlorophyll a. Residues Ala-208–Asp-228 form a helical membrane-spanning segment. A plastoquinone-binding residues include His-215 and Phe-262. His-215 contributes to the Fe cation binding site. Fe cation is bound at residue His-269. A helical membrane pass occupies residues Gly-279–Arg-295.

Belongs to the reaction center PufL/M/PsbA/D family. In terms of assembly, PSII is composed of 1 copy each of membrane proteins PsbA, PsbB, PsbC, PsbD, PsbE, PsbF, PsbH, PsbI, PsbJ, PsbK, PsbL, PsbM, PsbT, PsbX, PsbY, PsbZ, Psb30/Ycf12, at least 3 peripheral proteins of the oxygen-evolving complex and a large number of cofactors. It forms dimeric complexes. The D1/D2 heterodimer binds P680, chlorophylls that are the primary electron donor of PSII, and subsequent electron acceptors. It shares a non-heme iron and each subunit binds pheophytin, quinone, additional chlorophylls, carotenoids and lipids. There is also a Cl(-1) ion associated with D1 and D2, which is required for oxygen evolution. The PSII complex binds additional chlorophylls, carotenoids and specific lipids. is required as a cofactor.

The protein localises to the plastid. The protein resides in the chloroplast thylakoid membrane. It carries out the reaction 2 a plastoquinone + 4 hnu + 2 H2O = 2 a plastoquinol + O2. Photosystem II (PSII) is a light-driven water:plastoquinone oxidoreductase that uses light energy to abstract electrons from H(2)O, generating O(2) and a proton gradient subsequently used for ATP formation. It consists of a core antenna complex that captures photons, and an electron transfer chain that converts photonic excitation into a charge separation. The D1/D2 (PsbA/PsbD) reaction center heterodimer binds P680, the primary electron donor of PSII as well as several subsequent electron acceptors. D2 is needed for assembly of a stable PSII complex. In Lolium perenne (Perennial ryegrass), this protein is Photosystem II D2 protein.